Consider the following 346-residue polypeptide: tRNA N6-adenosine threonylcarbamoyltransferase (346 aa).

2 residues coordinate Fe cation: His110 and His114. Substrate-binding positions include 132–136 (LLSGG), Asp165, Gly178, and Asn274. A Fe cation-binding site is contributed by Asp298.

This sequence belongs to the KAE1 / TsaD family. Requires Fe(2+) as cofactor.

The protein localises to the cytoplasm. It carries out the reaction L-threonylcarbamoyladenylate + adenosine(37) in tRNA = N(6)-L-threonylcarbamoyladenosine(37) in tRNA + AMP + H(+). In terms of biological role, required for the formation of a threonylcarbamoyl group on adenosine at position 37 (t(6)A37) in tRNAs that read codons beginning with adenine. Is involved in the transfer of the threonylcarbamoyl moiety of threonylcarbamoyl-AMP (TC-AMP) to the N6 group of A37, together with TsaE and TsaB. TsaD likely plays a direct catalytic role in this reaction. The sequence is that of tRNA N6-adenosine threonylcarbamoyltransferase from Borreliella burgdorferi (strain ZS7) (Borrelia burgdorferi).